The sequence spans 422 residues: UDP-N-acetylglucosamine 1-carboxyvinyltransferase (422 aa).

22 to 23 (KN) is a binding site for phosphoenolpyruvate. Arg92 contributes to the UDP-N-acetyl-alpha-D-glucosamine binding site. Cys116 functions as the Proton donor in the catalytic mechanism. Cys116 is modified (2-(S-cysteinyl)pyruvic acid O-phosphothioketal). UDP-N-acetyl-alpha-D-glucosamine-binding positions include 121-125 (RPVDQ), Asp305, and Ile327.

Belongs to the EPSP synthase family. MurA subfamily.

It is found in the cytoplasm. The enzyme catalyses phosphoenolpyruvate + UDP-N-acetyl-alpha-D-glucosamine = UDP-N-acetyl-3-O-(1-carboxyvinyl)-alpha-D-glucosamine + phosphate. The protein operates within cell wall biogenesis; peptidoglycan biosynthesis. Its function is as follows. Cell wall formation. Adds enolpyruvyl to UDP-N-acetylglucosamine. This Sorangium cellulosum (strain So ce56) (Polyangium cellulosum (strain So ce56)) protein is UDP-N-acetylglucosamine 1-carboxyvinyltransferase.